The chain runs to 236 residues: Small ribosomal subunit protein uS2c (236 aa).

Belongs to the universal ribosomal protein uS2 family.

It is found in the plastid. The chain is Small ribosomal subunit protein uS2c (rps2) from Cuscuta exaltata (Tall dodder).